Consider the following 310-residue polypeptide: p-hydroxybenzoic acid efflux pump subunit AaeA (310 aa).

Residues 12 to 32 traverse the membrane as a helical segment; it reads AITVALVILAFIAISRAWVFY.

Belongs to the membrane fusion protein (MFP) (TC 8.A.1) family.

The protein resides in the cell inner membrane. In terms of biological role, forms an efflux pump with AaeB. The chain is p-hydroxybenzoic acid efflux pump subunit AaeA from Enterobacter sp. (strain 638).